An 82-amino-acid chain; its full sequence is MQIFNMVSLVALFALGATAVPVSSITGVQCCQANHGDLTTPQAQSLFKSHQKRQDYWVCHACNKQFTTPAALQKHKDTVVHP.

Positions 1 to 19 (MQIFNMVSLVALFALGATA) are cleaved as a signal peptide. Residues 57 to 81 (WVCHACNKQFTTPAALQKHKDTVVH) form a C2H2-type zinc finger.

It is found in the secreted. Its subcellular location is the host nucleus. Its function is as follows. Probable secreted effector that translocates into the nuclei of host cells to reprogram the expression of targeted genes by binding on effector binding elements in rice. This chain is Host transcription reprogramming factor 10, found in Pyricularia oryzae (strain 70-15 / ATCC MYA-4617 / FGSC 8958) (Rice blast fungus).